Reading from the N-terminus, the 338-residue chain is L-serine dehydratase (338 aa).

An N6-(pyridoxal phosphate)lysine modification is found at K39.

Belongs to the serine/threonine dehydratase family. Requires pyridoxal 5'-phosphate as cofactor.

The protein resides in the cytoplasm. It carries out the reaction L-serine = pyruvate + NH4(+). Its pathway is carbohydrate biosynthesis; gluconeogenesis. This is L-serine dehydratase (SDL1) from Saccharomyces cerevisiae (strain RM11-1a) (Baker's yeast).